The chain runs to 520 residues: Probable helicase MJECL08 (520 aa).

ATP-binding positions include R162, 171–176 (GAGKSN), and 501–502 (KI).

The protein belongs to the HerA family.

It carries out the reaction Couples ATP hydrolysis with the unwinding of duplex DNA at the replication fork by translocating in the 5'-3' direction. This creates two antiparallel DNA single strands (ssDNA). The leading ssDNA polymer is the template for DNA polymerase III holoenzyme which synthesizes a continuous strand.. The enzyme catalyses ATP + H2O = ADP + phosphate + H(+). It catalyses the reaction Couples ATP hydrolysis with the unwinding of duplex DNA by translocating in the 3'-5' direction.. A probably bidirectional DNA helicase. The sequence is that of Probable helicase MJECL08 from Methanocaldococcus jannaschii (strain ATCC 43067 / DSM 2661 / JAL-1 / JCM 10045 / NBRC 100440) (Methanococcus jannaschii).